The chain runs to 301 residues: Probable alpha-L-glutamate ligase (301 aa).

Residues leucine 104–glutamate 287 form the ATP-grasp domain. ATP contacts are provided by residues lysine 141, glutamate 178–phenylalanine 179, aspartate 187, and arginine 211–asparagine 213. Mg(2+) is bound by residues aspartate 248, glutamate 260, and asparagine 262. Mn(2+) contacts are provided by aspartate 248, glutamate 260, and asparagine 262.

Belongs to the RimK family. Mg(2+) serves as cofactor. The cofactor is Mn(2+).

In Hydrogenovibrio crunogenus (strain DSM 25203 / XCL-2) (Thiomicrospira crunogena), this protein is Probable alpha-L-glutamate ligase.